Here is a 116-residue protein sequence, read N- to C-terminus: CDKN2AIP N-terminal-like protein (116 aa).

An N-acetylmethionine modification is found at M1. Residues A24–S116 enclose the XRN2-binding (XTBD) domain.

It belongs to the CARF family. In terms of assembly, interacts with XRN2; the interaction is direct.

This Mus musculus (Mouse) protein is CDKN2AIP N-terminal-like protein (Cdkn2aipnl).